Here is a 76-residue protein sequence, read N- to C-terminus: Large ribosomal subunit protein uL29 (76 aa).

This sequence belongs to the universal ribosomal protein uL29 family.

The protein is Large ribosomal subunit protein uL29 of Corynebacterium kroppenstedtii (strain DSM 44385 / JCM 11950 / CIP 105744 / CCUG 35717).